We begin with the raw amino-acid sequence, 475 residues long: Aspartic proteinase 39 (475 aa).

The signal sequence occupies residues 1–23 (MELRRKLCIVVAVFVIVIEFASA). Residues 74 to 422 (YFTKIKLGSP…DLDNEVIGWA (349 aa)) form the Peptidase A1 domain. The active site involves Asp92. 2 N-linked (GlcNAc...) asparagine glycosylation sites follow: Asn124 and Asn222. Residue Asp303 is part of the active site. N-linked (GlcNAc...) asparagine glycans are attached at residues Asn425 and Asn446. Ser449 carries the GPI-anchor amidated serine lipid modification. Positions 450-475 (APRLLMITKLLTILSPLIVMAFTSLA) are cleaved as a propeptide — removed in mature form.

It belongs to the peptidase A1 family. Highly expressed in pollen and pollen tubes. Mostly expressed in inflorescence, flowers and siliques, and barely in leaves and seedlings.

It localises to the cell membrane. The protein localises to the cytoplasm. It is found in the cytosol. Its function is as follows. Displays aspartic proteolytic activity. Together with A36, contributes to pollen and ovule development, including the apical cell wall constitution of the growing pollen tubes. This is Aspartic proteinase 39 from Arabidopsis thaliana (Mouse-ear cress).